The sequence spans 154 residues: MSNSLAVVRLDPGLPLPSRAHDGDAGVDLYSAEDVVLPPGQRALVRTGVAVAIPFGMVGLVHPRSGLASRVGLSIVNSPGTIDAGYRGELKVALINLDPATPIVVNRGDRIAQLLVQRVELLELVEVSSFDEAGLAATSRGDGGHGSSGGHASL.

Substrate is bound by residues 64-66 (RSG), Asn77, 81-83 (TID), and Lys91.

It belongs to the dUTPase family. Homotrimer. The cofactor is Mg(2+).

The catalysed reaction is dUTP + H2O = dUMP + diphosphate + H(+). The protein operates within pyrimidine metabolism; dUMP biosynthesis; dUMP from dCTP (dUTP route): step 2/2. This enzyme is involved in nucleotide metabolism: it produces dUMP, the immediate precursor of thymidine nucleotides and it decreases the intracellular concentration of dUTP so that uracil cannot be incorporated into DNA. This is Deoxyuridine 5'-triphosphate nucleotidohydrolase from Mycobacterium marinum (strain ATCC BAA-535 / M).